The sequence spans 242 residues: Large ribosomal subunit protein uL30x (242 aa).

It belongs to the universal ribosomal protein uL30 family.

The protein is Large ribosomal subunit protein uL30x (RPL7C) of Arabidopsis thaliana (Mouse-ear cress).